Here is a 79-residue protein sequence, read N- to C-terminus: Small ribosomal subunit protein eS17 (79 aa).

The protein belongs to the eukaryotic ribosomal protein eS17 family.

The polypeptide is Small ribosomal subunit protein eS17 (Saccharolobus solfataricus (strain ATCC 35092 / DSM 1617 / JCM 11322 / P2) (Sulfolobus solfataricus)).